Here is a 125-residue protein sequence, read N- to C-terminus: Morphine 6-dehydrogenase (125 aa).

NADP(+) is bound by residues 9–18 (GHSIPVLGFI) and 74–111 (SALG…IERE).

The protein belongs to the aldo/keto reductase family. In terms of assembly, monomer. Post-translationally, the N-terminus is blocked.

The protein localises to the cytoplasm. The catalysed reaction is morphine + NAD(+) = morphinone + NADH + H(+). The enzyme catalyses morphine + NADP(+) = morphinone + NADPH + H(+). With respect to regulation, strongly inhibited by sulfhydryl reagents and quercetin, but not by pyrazole, barbital and indomethacine. Its function is as follows. Catalyzes the dehydrogenation of morphine to morphinone. Uses both NAD and NADP, but the activity is much greater with NAD than with NADP. In Oryctolagus cuniculus (Rabbit), this protein is Morphine 6-dehydrogenase.